Consider the following 785-residue polypeptide: Pre-rRNA-processing protein TSR1 homolog (785 aa).

The segment at 1-59 (MSTTGHRAGVFKKPSKPHKSWKGKRTKGEITSENRGREGVKQLTRSAHSTHRTISKDAR) is disordered. The span at 9–25 (GVFKKPSKPHKSWKGKR) shows a compositional bias: basic residues. Residues 26-40 (TKGEITSENRGREGV) show a composition bias toward basic and acidic residues. The Bms1-type G domain maps to 83-243 (APCLVTVVSL…LRILNETKKK (161 aa)). A disordered region spans residues 307–426 (PHPLKAHNKT…GETTASEMMF (120 aa)). Positions 376-409 (LDDEDDEDEEDSDEDMDDSDNEEVEDDSEEEEPM) are enriched in acidic residues.

Belongs to the TRAFAC class translation factor GTPase superfamily. Bms1-like GTPase family. TSR1 subfamily.

It localises to the nucleus. Its subcellular location is the nucleolus. Functionally, required during maturation of the 40S ribosomal subunit in the nucleolus. In Caenorhabditis elegans, this protein is Pre-rRNA-processing protein TSR1 homolog (tag-151).